Reading from the N-terminus, the 45-residue chain is Somatoliberin (45 aa).

The protein belongs to the glucagon family.

Its subcellular location is the secreted. Its function is as follows. GRF is released by the hypothalamus and acts on the adenohypophyse to stimulate the secretion of growth hormone. The polypeptide is Somatoliberin (ghrh) (Cyprinus carpio (Common carp)).